A 159-amino-acid polypeptide reads, in one-letter code: Ribosomal RNA large subunit methyltransferase H (159 aa).

S-adenosyl-L-methionine contacts are provided by residues leucine 76, glycine 108, and 127 to 132; that span reads FSKMTL.

This sequence belongs to the RNA methyltransferase RlmH family. Homodimer.

The protein localises to the cytoplasm. The catalysed reaction is pseudouridine(1915) in 23S rRNA + S-adenosyl-L-methionine = N(3)-methylpseudouridine(1915) in 23S rRNA + S-adenosyl-L-homocysteine + H(+). Its function is as follows. Specifically methylates the pseudouridine at position 1915 (m3Psi1915) in 23S rRNA. In Bacillus thuringiensis subsp. konkukian (strain 97-27), this protein is Ribosomal RNA large subunit methyltransferase H.